A 620-amino-acid chain; its full sequence is 1-deoxy-D-xylulose-5-phosphate synthase (620 aa).

Thiamine diphosphate is bound by residues His-75 and 116–118 (AHS). Residue Asp-147 participates in Mg(2+) binding. Residues 148–149 (GA), Asn-177, Tyr-284, and Glu-366 each bind thiamine diphosphate. Position 177 (Asn-177) interacts with Mg(2+).

This sequence belongs to the transketolase family. DXPS subfamily. In terms of assembly, homodimer. The cofactor is Mg(2+). Requires thiamine diphosphate as cofactor.

It carries out the reaction D-glyceraldehyde 3-phosphate + pyruvate + H(+) = 1-deoxy-D-xylulose 5-phosphate + CO2. It participates in metabolic intermediate biosynthesis; 1-deoxy-D-xylulose 5-phosphate biosynthesis; 1-deoxy-D-xylulose 5-phosphate from D-glyceraldehyde 3-phosphate and pyruvate: step 1/1. Catalyzes the acyloin condensation reaction between C atoms 2 and 3 of pyruvate and glyceraldehyde 3-phosphate to yield 1-deoxy-D-xylulose-5-phosphate (DXP). The protein is 1-deoxy-D-xylulose-5-phosphate synthase of Bordetella avium (strain 197N).